Consider the following 152-residue polypeptide: Dynein light chain Tctex-type protein 2B (152 aa).

Belongs to the dynein light chain Tctex-type family. Light chain of the cytoplasmic dynein complex 2, a multisubunit complex composed at least of eleven different proteins. The cytoplasmic dynein 2 complex consists of two catalytic heavy chains (HCs) and a number of non-catalytic subunits presented by intermediate chains (ICs), light intermediate chains (LICs) and light chains (LCs). Among them, a heavy chain (DYNC2H1), two intermediate chains (DYNC2I2 and DYNC2I1), a light intermediate chain (DYNC2LI1), and a light chain (DYNLT2B) are unique to the dynein-2 complex, but a subset of the light chains are also shared by dynein-1 and dynein-2 complexes. The dimer DYNLT2B-DYNLT1/DYNLT3 interacts with DYNC2I1; this interaction is crucial for retrograde trafficking of ciliary proteins.

It localises to the dynein axonemal particle. Acts as one of several non-catalytic accessory components of the cytoplasmic dynein 2 complex (dynein-2 complex), a motor protein complex that drives the movement of cargos along microtubules within cilia and flagella in concert with the intraflagellar transport (IFT) system. Required for proper retrograde ciliary transport. This Bos taurus (Bovine) protein is Dynein light chain Tctex-type protein 2B (DYNLT2B).